The following is a 449-amino-acid chain: Keratin, type I cuticular Ha7 (449 aa).

Residues 1-104 form a head region; it reads MTSFYSTSSC…YGKNTLNGHE (104 aa). Residues 104 to 415 enclose the IF rod domain; the sequence is EKETMKFLND…NLLESEDCKL (312 aa). The coil 1A stretch occupies residues 105–139; it reads KETMKFLNDRLANYLEKVRQLEQENAELETTLLER. Positions 140 to 150 are linker 1; that stretch reads SKCHESTVCPD. The interval 151 to 251 is coil 1B; sequence YQSYFRTIEE…HEQEVKILRS (101 aa). Residues 252-267 are linker 12; sequence QLGEKFRIELDIEPTI. The coil 2 stretch occupies residues 268-411; that stretch reads DLNRVLGEMR…ATYRNLLESE (144 aa). The tract at residues 416–449 is tail; the sequence is PCNPCSTPASCTSCPSCGPVTGGSPSGHGASMGR.

This sequence belongs to the intermediate filament family.

The protein is Keratin, type I cuticular Ha7 (KRT37) of Homo sapiens (Human).